The following is an 88-amino-acid chain: Snakin-1 (88 aa).

Positions 1–25 (MKLFLLTLLLVTLVITPSLIQTTMA) are cleaved as a signal peptide.

The protein belongs to the GASA family. Six disulfide bonds may be present. As to expression, expressed in tubers, stems, axillary and young floral buds, sepals, petals, stamens and carpels, but not in roots, stolons, shoot apex meristem or young leaves.

It localises to the secreted. The protein resides in the cell wall. In terms of biological role, has an antimicrobial activity. Causes a rapid aggregation of both Gram-positive and Gram-negative bacteria, but the antimicrobial activity is not correlated with the capacity to aggregate bacteria. The chain is Snakin-1 (SN1) from Solanum tuberosum (Potato).